The chain runs to 68 residues: Conotoxin Mr3.3 (68 aa).

The signal sequence occupies residues 1–19 (MSRLGVLLTICLLLFPLTA). A propeptide spanning residues 20 to 51 (VPLDGDQPADRPAERLQDDISSEHHPHFDSGR) is cleaved from the precursor. The segment at 22–46 (LDGDQPADRPAERLQDDISSEHHPH) is disordered. The segment covering 27–46 (PADRPAERLQDDISSEHHPH) has biased composition (basic and acidic residues). 3 cysteine pairs are disulfide-bonded: Cys53/Cys67, Cys54/Cys63, and Cys59/Cys66. The residue at position 65 (Pro65) is a 4-hydroxyproline.

It belongs to the conotoxin M superfamily. In terms of tissue distribution, expressed by the venom duct.

The protein resides in the secreted. This is Conotoxin Mr3.3 from Conus marmoreus (Marble cone).